Here is a 1215-residue protein sequence, read N- to C-terminus: Kinesin-like protein KIN-7I (1215 aa).

The Kinesin motor domain maps to 3-327; that stretch reads RIHVAVRARP…LQFASRALRV (325 aa). Residue 79–86 participates in ATP binding; it reads GQTNSGKT. Coiled coils occupy residues 333 to 414, 571 to 646, 708 to 855, and 894 to 979; these read VNEI…IENL, ESEA…AAYE, IRDY…KRDS, and DMEA…KEDM.

This sequence belongs to the TRAFAC class myosin-kinesin ATPase superfamily. Kinesin family. KIN-7 subfamily.

The sequence is that of Kinesin-like protein KIN-7I from Oryza sativa subsp. japonica (Rice).